The following is a 240-amino-acid chain: 1-(5-phosphoribosyl)-5-[(5-phosphoribosylamino)methylideneamino] imidazole-4-carboxamide isomerase (240 aa).

D8 acts as the Proton acceptor in catalysis. D129 serves as the catalytic Proton donor.

It belongs to the HisA/HisF family.

Its subcellular location is the cytoplasm. The enzyme catalyses 1-(5-phospho-beta-D-ribosyl)-5-[(5-phospho-beta-D-ribosylamino)methylideneamino]imidazole-4-carboxamide = 5-[(5-phospho-1-deoxy-D-ribulos-1-ylimino)methylamino]-1-(5-phospho-beta-D-ribosyl)imidazole-4-carboxamide. It functions in the pathway amino-acid biosynthesis; L-histidine biosynthesis; L-histidine from 5-phospho-alpha-D-ribose 1-diphosphate: step 4/9. In Listeria monocytogenes serotype 4b (strain CLIP80459), this protein is 1-(5-phosphoribosyl)-5-[(5-phosphoribosylamino)methylideneamino] imidazole-4-carboxamide isomerase.